Here is a 214-residue protein sequence, read N- to C-terminus: Glycine-rich protein 2 (214 aa).

In terms of domain architecture, CSD spans 8-75; the sequence is RAKGTVKWFS…RTKAVDVTGP (68 aa). Positions 54–91 are disordered; sequence TVEFEVESGGDGRTKAVDVTGPDGAAVQGGRGGGGGGG. Positions 80–91 are enriched in gly residues; the sequence is VQGGRGGGGGGG. CCHC-type zinc fingers lie at residues 157 to 174 and 194 to 211; these read SGCF…DCSQ and GGCY…ECTS.

The sequence is that of Glycine-rich protein 2 (GRP-2) from Nicotiana sylvestris (Wood tobacco).